The chain runs to 739 residues: Catalase-peroxidase 2 (739 aa).

A signal peptide spans 1–26 (MKKSTIPTLSALTLAMSLAFGGSVIA). Positions 105-227 (WHSAGVYRIF…MGATQMGLIY (123 aa)) form a cross-link, tryptophyl-tyrosyl-methioninium (Trp-Tyr) (with M-253). Catalysis depends on histidine 106, which acts as the Proton acceptor. A cross-link (tryptophyl-tyrosyl-methioninium (Tyr-Met) (with W-105)) is located at residues 227–253 (YVNPEGPNGVPDPLASAKEIRDTFGRM). Histidine 268 contributes to the heme b binding site.

Belongs to the peroxidase family. Peroxidase/catalase subfamily. As to quaternary structure, homodimer or homotetramer. It depends on heme b as a cofactor. Formation of the three residue Trp-Tyr-Met cross-link is important for the catalase, but not the peroxidase activity of the enzyme.

The enzyme catalyses H2O2 + AH2 = A + 2 H2O. It carries out the reaction 2 H2O2 = O2 + 2 H2O. Its function is as follows. Bifunctional enzyme with both catalase and broad-spectrum peroxidase activity. The sequence is that of Catalase-peroxidase 2 from Shewanella sp. (strain MR-7).